The following is a 128-amino-acid chain: Elongation factor G (128 aa).

Belongs to the GTP-binding elongation factor family. EF-G/EF-2 subfamily.

The protein localises to the cytoplasm. In terms of biological role, catalyzes the GTP-dependent ribosomal translocation step during translation elongation. During this step, the ribosome changes from the pre-translocational (PRE) to the post-translocational (POST) state as the newly formed A-site-bound peptidyl-tRNA and P-site-bound deacylated tRNA move to the P and E sites, respectively. Catalyzes the coordinated movement of the two tRNA molecules, the mRNA and conformational changes in the ribosome. The protein is Elongation factor G (fusA) of Planobispora rosea.